The following is a 349-amino-acid chain: Hydroxymethylglutaryl-CoA synthase (349 aa).

Positions 29 and 30 each coordinate (3S)-3-hydroxy-3-methylglutaryl-CoA. Glu81 (proton donor/acceptor) is an active-site residue. Cys113 and Thr154 together coordinate (3S)-3-hydroxy-3-methylglutaryl-CoA. The Acyl-thioester intermediate role is filled by Cys113. Arg202 lines the CoA pocket. (3S)-3-hydroxy-3-methylglutaryl-CoA-binding residues include Thr204 and His237. His237 functions as the Proton donor/acceptor in the catalytic mechanism. Lys242 contacts CoA. The (3S)-3-hydroxy-3-methylglutaryl-CoA site is built by Lys246, Asn269, and Ser299.

Belongs to the thiolase-like superfamily. Archaeal HMG-CoA synthase family. In terms of assembly, interacts with acetoacetyl-CoA thiolase that catalyzes the precedent step in the pathway and with a DUF35 protein. The acetoacetyl-CoA thiolase/HMG-CoA synthase complex channels the intermediate via a fused CoA-binding site, which allows for efficient coupling of the endergonic thiolase reaction with the exergonic HMGCS reaction.

It carries out the reaction acetoacetyl-CoA + acetyl-CoA + H2O = (3S)-3-hydroxy-3-methylglutaryl-CoA + CoA + H(+). The protein operates within metabolic intermediate biosynthesis; (R)-mevalonate biosynthesis; (R)-mevalonate from acetyl-CoA: step 2/3. Its function is as follows. Catalyzes the condensation of acetyl-CoA with acetoacetyl-CoA to form 3-hydroxy-3-methylglutaryl-CoA (HMG-CoA). Functions in the mevalonate (MVA) pathway leading to isopentenyl diphosphate (IPP), a key precursor for the biosynthesis of isoprenoid compounds that are building blocks of archaeal membrane lipids. In Methanosarcina acetivorans (strain ATCC 35395 / DSM 2834 / JCM 12185 / C2A), this protein is Hydroxymethylglutaryl-CoA synthase.